The chain runs to 128 residues: Cytochrome c-type biogenesis protein CcmE (128 aa).

At 1 to 8 (MQKRVRNR) the chain is on the cytoplasmic side. Residues 9-29 (LITIIICFCSACLGISIILYN) form a helical; Signal-anchor for type II membrane protein membrane-spanning segment. Over 30-128 (LEKNIVFFLP…KHDENYRPPQ (99 aa)) the chain is Extracellular. 2 residues coordinate heme: His120 and Tyr124.

This sequence belongs to the CcmE/CycJ family.

It is found in the cell membrane. Heme chaperone required for the biogenesis of c-type cytochromes. Transiently binds heme delivered by CcmC and transfers the heme to apo-cytochromes in a process facilitated by CcmF and CcmH. This is Cytochrome c-type biogenesis protein CcmE from Rickettsia africae (strain ESF-5).